Reading from the N-terminus, the 368-residue chain is Nuclease EXOG, mitochondrial (368 aa).

Residues 1 to 41 constitute a mitochondrion transit peptide; sequence MAIKSIASRLRGSRRFLSGFVAGAVVGAAGAGLAALQFFRS. The active-site Proton acceptor is the histidine 140. Asparagine 171 contributes to the a divalent metal cation binding site.

The protein belongs to the DNA/RNA non-specific endonuclease family. As to quaternary structure, homodimer. Requires a divalent metal cation as cofactor. Ubiquitous.

The protein resides in the mitochondrion inner membrane. Functionally, endo/exonuclease with nicking activity towards supercoiled DNA, a preference for single-stranded DNA and 5'-3' exonuclease activity. The sequence is that of Nuclease EXOG, mitochondrial (EXOG) from Homo sapiens (Human).